The primary structure comprises 90 residues: Putative large ribosomal subunit protein uL23c (90 aa).

The tract at residues 1–46 (MDGIKYAVFTDKSIQLLGKKQYTSNVESRSTRTEIKHWVELWNSYE) is coded by first part of gene. The interval 47–90 (MNSHRLPGKGRRMGPIMGHTMHYRRMIITLQSSYSIPPLRKKRT) is coded by second part of gene.

This sequence belongs to the universal ribosomal protein uL23 family. As to quaternary structure, part of the 50S ribosomal subunit.

It is found in the plastid. The protein localises to the chloroplast. Functionally, binds to 23S rRNA. The protein is Putative large ribosomal subunit protein uL23c (rpl23) of Spinacia oleracea (Spinach).